A 39-amino-acid polypeptide reads, in one-letter code: SDSKIGNGCFGFPLDRIGSVSGLGCNRIMQNPPKKFSGE.

The cysteines at positions 9 and 25 are disulfide-linked.

Belongs to the natriuretic peptide family. As to expression, expressed by the venom gland.

It localises to the secreted. In terms of biological role, snake venom natriuretic peptide that exhibits vasoactive and hypotensive activity. Produces a near complete relaxation in pre-contracted aortae by activating the natriuretic peptide receptor 1 (NPR1). Stimulates cGMP production through the natriuretic peptide receptor 1 (NPR1) with high potencies for the rat NPR1 (EC(50)=100 nM), and very weak potencies over human NPR1 (28% activation at 10 uM). In vivo, reduces both systolic and diastolic blood pressure with no effect on heart rate, when intravenously injected in conscious rabbits. Also enhances the bradycardia due to cardiac afferent stimulation (Bezold-Jarisch reflex). This Oxyuranus microlepidotus (Inland taipan) protein is Natriuretic peptide TNPc.